Reading from the N-terminus, the 450-residue chain is MFS-type transporter avaK (450 aa).

8 consecutive transmembrane segments (helical) span residues valine 18–proline 38, arginine 100–leucine 120, alanine 148–alanine 168, alanine 171–valine 191, alanine 244–leucine 264, leucine 280–alanine 300, phenylalanine 329–phenylalanine 349, and glycine 408–valine 428.

It belongs to the major facilitator superfamily.

The protein localises to the membrane. Its pathway is secondary metabolite biosynthesis. In terms of biological role, MFS-type transporter; part of the cluster that mediates the biosynthesis of a highly modified cyclo-arginine-tryptophan dipeptide (cRW). In Aspergillus versicolor, this protein is MFS-type transporter avaK.